The chain runs to 271 residues: Formamidopyrimidine-DNA glycosylase (271 aa).

P2 acts as the Schiff-base intermediate with DNA in catalysis. Catalysis depends on E3, which acts as the Proton donor. Catalysis depends on K58, which acts as the Proton donor; for beta-elimination activity. 3 residues coordinate DNA: H91, R110, and R152. The segment at 237–271 (RVYDRAGQPCRVCGEPIRCVRLGQRATYYCPRCQR) adopts an FPG-type zinc-finger fold. The Proton donor; for delta-elimination activity role is filled by R261.

This sequence belongs to the FPG family. As to quaternary structure, monomer. Zn(2+) is required as a cofactor.

The enzyme catalyses Hydrolysis of DNA containing ring-opened 7-methylguanine residues, releasing 2,6-diamino-4-hydroxy-5-(N-methyl)formamidopyrimidine.. It carries out the reaction 2'-deoxyribonucleotide-(2'-deoxyribose 5'-phosphate)-2'-deoxyribonucleotide-DNA = a 3'-end 2'-deoxyribonucleotide-(2,3-dehydro-2,3-deoxyribose 5'-phosphate)-DNA + a 5'-end 5'-phospho-2'-deoxyribonucleoside-DNA + H(+). Its function is as follows. Involved in base excision repair of DNA damaged by oxidation or by mutagenic agents. Acts as a DNA glycosylase that recognizes and removes damaged bases. Has a preference for oxidized purines, such as 7,8-dihydro-8-oxoguanine (8-oxoG). Has AP (apurinic/apyrimidinic) lyase activity and introduces nicks in the DNA strand. Cleaves the DNA backbone by beta-delta elimination to generate a single-strand break at the site of the removed base with both 3'- and 5'-phosphates. The polypeptide is Formamidopyrimidine-DNA glycosylase (Methylococcus capsulatus (strain ATCC 33009 / NCIMB 11132 / Bath)).